We begin with the raw amino-acid sequence, 244 residues long: NAD(P)H-quinone oxidoreductase subunit K (244 aa).

Residues Cys60, Cys61, Cys125, and Cys156 each coordinate [4Fe-4S] cluster. The segment at 213–244 (TSANSIPSSKKEKITELPDNNEKAEIIDTLEN) is disordered. A compositionally biased stretch (basic and acidic residues) spans 221-238 (SKKEKITELPDNNEKAEI).

Belongs to the complex I 20 kDa subunit family. In terms of assembly, NDH-1 can be composed of about 15 different subunits; different subcomplexes with different compositions have been identified which probably have different functions. Requires [4Fe-4S] cluster as cofactor.

The protein resides in the cellular thylakoid membrane. It carries out the reaction a plastoquinone + NADH + (n+1) H(+)(in) = a plastoquinol + NAD(+) + n H(+)(out). The enzyme catalyses a plastoquinone + NADPH + (n+1) H(+)(in) = a plastoquinol + NADP(+) + n H(+)(out). In terms of biological role, NDH-1 shuttles electrons from an unknown electron donor, via FMN and iron-sulfur (Fe-S) centers, to quinones in the respiratory and/or the photosynthetic chain. The immediate electron acceptor for the enzyme in this species is believed to be plastoquinone. Couples the redox reaction to proton translocation, and thus conserves the redox energy in a proton gradient. Cyanobacterial NDH-1 also plays a role in inorganic carbon-concentration. The chain is NAD(P)H-quinone oxidoreductase subunit K from Prochlorococcus marinus (strain MIT 9301).